A 626-amino-acid polypeptide reads, in one-letter code: UvrABC system protein C (626 aa).

The GIY-YIG domain occupies 26–105 (QEPGVYFMGD…IKQHQPHFNV (80 aa)). The 36-residue stretch at 215-250 (QELHQLLTQQMEKAAADLKFEQAALIRDQINSLGKL) folds into the UVR domain.

Belongs to the UvrC family. In terms of assembly, interacts with UvrB in an incision complex.

It localises to the cytoplasm. In terms of biological role, the UvrABC repair system catalyzes the recognition and processing of DNA lesions. UvrC both incises the 5' and 3' sides of the lesion. The N-terminal half is responsible for the 3' incision and the C-terminal half is responsible for the 5' incision. This chain is UvrABC system protein C, found in Synechocystis sp. (strain ATCC 27184 / PCC 6803 / Kazusa).